Reading from the N-terminus, the 207-residue chain is uncharacterized protein (207 aa).

Belongs to the flavoredoxin family. Requires FMN as cofactor.

This is an uncharacterized protein from Bacillus subtilis (strain 168).